We begin with the raw amino-acid sequence, 58 residues long: Large ribosomal subunit protein bL32c (58 aa).

It belongs to the bacterial ribosomal protein bL32 family.

It localises to the plastid. The protein localises to the chloroplast. This chain is Large ribosomal subunit protein bL32c (rpl32), found in Adiantum capillus-veneris (Maidenhair fern).